Here is a 20-residue protein sequence, read N- to C-terminus: Cytochrome P450 3A5 (20 aa).

It belongs to the cytochrome P450 family. Heme is required as a cofactor.

It localises to the endoplasmic reticulum membrane. Its subcellular location is the microsome membrane. It catalyses the reaction an organic molecule + reduced [NADPH--hemoprotein reductase] + O2 = an alcohol + oxidized [NADPH--hemoprotein reductase] + H2O + H(+). Functionally, 6-beta-testosterone hydroxylase. The polypeptide is Cytochrome P450 3A5 (Papio sp. (Baboon)).